A 90-amino-acid polypeptide reads, in one-letter code: Large ribosomal subunit protein bL27 (90 aa).

The segment at 1–20 (MAHKKAGGSSRNGRDSAGKR) is disordered.

The protein belongs to the bacterial ribosomal protein bL27 family.

The sequence is that of Large ribosomal subunit protein bL27 from Rhodopseudomonas palustris (strain ATCC BAA-98 / CGA009).